Here is a 251-residue protein sequence, read N- to C-terminus: uncharacterized protein (251 aa).

This is an uncharacterized protein from Homo sapiens (Human).